The sequence spans 156 residues: Small ribosomal subunit protein uS7 (156 aa).

The protein belongs to the universal ribosomal protein uS7 family. Part of the 30S ribosomal subunit. Contacts proteins S9 and S11.

One of the primary rRNA binding proteins, it binds directly to 16S rRNA where it nucleates assembly of the head domain of the 30S subunit. Is located at the subunit interface close to the decoding center, probably blocks exit of the E-site tRNA. The chain is Small ribosomal subunit protein uS7 from Mycolicibacterium smegmatis (strain ATCC 700084 / mc(2)155) (Mycobacterium smegmatis).